The primary structure comprises 602 residues: Aspartate--tRNA(Asp/Asn) ligase (602 aa).

An L-aspartate-binding site is contributed by glutamate 191. The tract at residues 215–218 (QLYK) is aspartate. Arginine 237 lines the L-aspartate pocket. ATP-binding positions include 237-239 (RDE) and glutamine 246. L-aspartate is bound at residue histidine 465. ATP is bound at residue glutamate 499. Arginine 506 serves as a coordination point for L-aspartate. Residue 551–554 (GLDR) participates in ATP binding.

It belongs to the class-II aminoacyl-tRNA synthetase family. Type 1 subfamily. In terms of assembly, homodimer.

It localises to the cytoplasm. It catalyses the reaction tRNA(Asx) + L-aspartate + ATP = L-aspartyl-tRNA(Asx) + AMP + diphosphate. Its function is as follows. Aspartyl-tRNA synthetase with relaxed tRNA specificity since it is able to aspartylate not only its cognate tRNA(Asp) but also tRNA(Asn). Reaction proceeds in two steps: L-aspartate is first activated by ATP to form Asp-AMP and then transferred to the acceptor end of tRNA(Asp/Asn). The protein is Aspartate--tRNA(Asp/Asn) ligase of Treponema pallidum (strain Nichols).